Reading from the N-terminus, the 211-residue chain is Small ribosomal subunit protein uS3 (211 aa).

A KH type-2 domain is found at 38–106 (LRKFIKKAFY…NIELNIIEVK (69 aa)).

Belongs to the universal ribosomal protein uS3 family. In terms of assembly, part of the 30S ribosomal subunit. Forms a tight complex with proteins S10 and S14.

In terms of biological role, binds the lower part of the 30S subunit head. Binds mRNA in the 70S ribosome, positioning it for translation. This is Small ribosomal subunit protein uS3 from Ehrlichia ruminantium (strain Gardel).